The chain runs to 698 residues: Effector protein AvrPphDPgy (698 aa).

Residues 1-15 show a composition bias toward polar residues; the sequence is MNPLRSIQHNITTPP. Disordered regions lie at residues 1–36 and 171–200; these read MNPL…HPKR and VDSS…DSDS. Residues 172 to 181 show a composition bias toward low complexity; that stretch reads DSSSPLLSSP.

The protein resides in the secreted. Functionally, effector protein involved in non-host recognition. The sequence is that of Effector protein AvrPphDPgy (avrPphDPgy) from Pseudomonas savastanoi pv. glycinea (Pseudomonas syringae pv. glycinea).